Consider the following 282-residue polypeptide: Shikimate dehydrogenase (NADP(+)) (282 aa).

Shikimate-binding positions include 19 to 21 (TQS) and threonine 66. The active-site Proton acceptor is lysine 70. The shikimate site is built by asparagine 91 and aspartate 107. Residues 132 to 136 (GAGGA), 155 to 160 (NRTITR), isoleucine 224, and glycine 246 contribute to the NADP(+) site.

Belongs to the shikimate dehydrogenase family. In terms of assembly, homodimer.

It carries out the reaction shikimate + NADP(+) = 3-dehydroshikimate + NADPH + H(+). Its pathway is metabolic intermediate biosynthesis; chorismate biosynthesis; chorismate from D-erythrose 4-phosphate and phosphoenolpyruvate: step 4/7. Its function is as follows. Involved in the biosynthesis of the chorismate, which leads to the biosynthesis of aromatic amino acids. Catalyzes the reversible NADPH linked reduction of 3-dehydroshikimate (DHSA) to yield shikimate (SA). The polypeptide is Shikimate dehydrogenase (NADP(+)) (Buchnera aphidicola subsp. Baizongia pistaciae (strain Bp)).